The sequence spans 108 residues: U-scoloptoxin(16)-Er10a (108 aa).

The first 24 residues, 1-24, serve as a signal peptide directing secretion; the sequence is MASFTSFCVLFTFCLLLLAHQARS.

It belongs to the scoloptoxin-16 family. Post-translationally, contains 4 disulfide bonds. In terms of tissue distribution, expressed by the venom gland.

The protein resides in the secreted. The protein is U-scoloptoxin(16)-Er10a of Ethmostigmus rubripes (Giant centipede).